Here is a 144-residue protein sequence, read N- to C-terminus: Large ribosomal subunit protein uL11 (144 aa).

This sequence belongs to the universal ribosomal protein uL11 family. Part of the ribosomal stalk of the 50S ribosomal subunit. Interacts with L10 and the large rRNA to form the base of the stalk. L10 forms an elongated spine to which L12 dimers bind in a sequential fashion forming a multimeric L10(L12)X complex. Post-translationally, one or more lysine residues are methylated.

Forms part of the ribosomal stalk which helps the ribosome interact with GTP-bound translation factors. This chain is Large ribosomal subunit protein uL11, found in Corynebacterium glutamicum (strain R).